We begin with the raw amino-acid sequence, 113 residues long: Hydrogenase maturation factor HypA (113 aa).

Histidine 2 contacts Ni(2+). 4 residues coordinate Zn(2+): cysteine 73, cysteine 76, cysteine 89, and cysteine 92.

This sequence belongs to the HypA/HybF family.

In terms of biological role, involved in the maturation of [NiFe] hydrogenases. Required for nickel insertion into the metal center of the hydrogenase. This Beijerinckia indica subsp. indica (strain ATCC 9039 / DSM 1715 / NCIMB 8712) protein is Hydrogenase maturation factor HypA.